Reading from the N-terminus, the 490-residue chain is Myocilin (490 aa).

The N-terminal stretch at 1–18 (MPAVQLLLLACLLGGVGA) is a signal peptide. A coiled-coil region spans residues 51 to 170 (GQAMLAIQEL…QEVASLRRGQ (120 aa)). The interval 152-186 (LARRLESSSQEVASLRRGQCPQAHSSSQDVPSGSR) is disordered. The span at 173–182 (QAHSSSQDVP) shows a compositional bias: polar residues. One can recognise an Olfactomedin-like domain in the interval 230-489 (GCGELVWVGE…MVSYDIKLSR (260 aa)). Cys231 and Cys419 are joined by a disulfide. Ca(2+) is bound by residues Asp366, Asn414, Ala415, Ile463, and Asp464. The short motif at 488 to 490 (SRL) is the Microbody targeting signal element.

Homodimer (via N-terminus). Can also form higher oligomers. Interacts with OLFM3, FN1, NRCAM, GLDN and NFASC. Interacts (via N-terminus) with MYL2. Interacts with SFRP1, FRZB, FZD7, FZD10, FZD1 and WIF1; regulates Wnt signaling. Interacts with SNTA1; regulates muscle hypertrophy. Interacts with ERBB2 and ERBB3; activates ERBB2-ERBB3 signaling pathway. Interacts with SNCG; affects its secretion and its aggregation. Palmitoylated. Post-translationally, undergoes a calcium-dependent proteolytic cleavage at Gln-212 by CAPN2 in the endoplasmic reticulum. The result is the production of two fragments, one of 35 kDa containing the C-terminal olfactomedin-like domain, and another of 20 kDa containing the N-terminal leucine zipper-like domain. In terms of processing, glycosylated. As to expression, the myocilin 35 kDa fragment is detected in iris and ciliary body.

It is found in the secreted. The protein localises to the golgi apparatus. It localises to the cytoplasmic vesicle. The protein resides in the extracellular space. Its subcellular location is the extracellular matrix. It is found in the extracellular exosome. The protein localises to the mitochondrion. It localises to the mitochondrion intermembrane space. The protein resides in the mitochondrion inner membrane. Its subcellular location is the mitochondrion outer membrane. It is found in the rough endoplasmic reticulum. The protein localises to the cell projection. It localises to the cilium. The protein resides in the endoplasmic reticulum. Secreted glycoprotein regulating the activation of different signaling pathways in adjacent cells to control different processes including cell adhesion, cell-matrix adhesion, cytoskeleton organization and cell migration. Promotes substrate adhesion, spreading and formation of focal contacts. Negatively regulates cell-matrix adhesion and stress fiber assembly through Rho protein signal transduction. Modulates the organization of actin cytoskeleton by stimulating the formation of stress fibers through interactions with components of Wnt signaling pathways. Promotes cell migration through activation of PTK2 and the downstream phosphatidylinositol 3-kinase signaling. Plays a role in bone formation and promotes osteoblast differentiation in a dose-dependent manner through mitogen-activated protein kinase signaling. Mediates myelination in the peripheral nervous system through ERBB2/ERBB3 signaling. Plays a role as a regulator of muscle hypertrophy through the components of dystrophin-associated protein complex. Involved in positive regulation of mitochondrial depolarization. Plays a role in neurite outgrowth. May participate in the obstruction of fluid outflow in the trabecular meshwork. The chain is Myocilin (MYOC) from Bos taurus (Bovine).